The primary structure comprises 360 residues: Glyceraldehyde-3-phosphate dehydrogenase (360 aa).

NAD(+) is bound by residues 13–14 (RI), Asp-35, and Arg-82. Residues 153–155 (SCT), Thr-184, 213–214 (TG), and Arg-236 each bind D-glyceraldehyde 3-phosphate. Cys-154 acts as the Nucleophile in catalysis. Asn-318 is an NAD(+) binding site.

It belongs to the glyceraldehyde-3-phosphate dehydrogenase family. Homotetramer.

It catalyses the reaction D-glyceraldehyde 3-phosphate + phosphate + NAD(+) = (2R)-3-phospho-glyceroyl phosphate + NADH + H(+). Its pathway is carbohydrate degradation; glycolysis; pyruvate from D-glyceraldehyde 3-phosphate: step 1/5. Its function is as follows. Key enzyme in glycolysis that catalyzes the first step of the pathway by converting D-glyceraldehyde 3-phosphate (G3P) into 3-phospho-D-glyceroyl phosphate. Essential for the maintenance of cellular ATP levels and carbohydrate metabolism. The chain is Glyceraldehyde-3-phosphate dehydrogenase from Atriplex nummularia (Old man saltbush).